Reading from the N-terminus, the 216-residue chain is Adenylate kinase (216 aa).

Gly10 to Thr15 lines the ATP pocket. Positions Ser30 to Val59 are NMP. Residues Thr31, Arg36, Gln57–Val59, Gly85–Arg88, and Gln92 contribute to the AMP site. Positions Gly126–Asp164 are LID. Arg127 contributes to the ATP binding site. Cys130, Cys133, Cys150, and Cys153 together coordinate Zn(2+). Positions 161 and 172 each coordinate AMP. An ATP-binding site is contributed by Ala200.

This sequence belongs to the adenylate kinase family. Monomer.

The protein localises to the cytoplasm. It carries out the reaction AMP + ATP = 2 ADP. It participates in purine metabolism; AMP biosynthesis via salvage pathway; AMP from ADP: step 1/1. In terms of biological role, catalyzes the reversible transfer of the terminal phosphate group between ATP and AMP. Plays an important role in cellular energy homeostasis and in adenine nucleotide metabolism. The sequence is that of Adenylate kinase from Novosphingobium aromaticivorans (strain ATCC 700278 / DSM 12444 / CCUG 56034 / CIP 105152 / NBRC 16084 / F199).